The chain runs to 559 residues: Nuclear envelope integral membrane protein (559 aa).

Residues methionine 1 to alanine 15 form the signal peptide. 3 N-linked (GlcNAc...) asparagine glycosylation sites follow: asparagine 67, asparagine 81, and asparagine 114. 5 helical membrane passes run tyrosine 164 to tryptophan 184, isoleucine 192 to tryptophan 212, isoleucine 218 to methionine 238, leucine 267 to isoleucine 287, and isoleucine 290 to tryptophan 310. Asparagine 408 and asparagine 465 each carry an N-linked (GlcNAc...) asparagine glycan. Disordered regions lie at residues arginine 475–proline 494 and lysine 510–glutamate 559. Over residues proline 517 to threonine 526 the composition is skewed to polar residues. Basic and acidic residues predominate over residues tyrosine 530–alanine 539.

Belongs to the NEMP family.

Its subcellular location is the nucleus inner membrane. Functionally, contributes to nuclear envelope stiffness in germ cells. Required for fertility. The protein is Nuclear envelope integral membrane protein of Caenorhabditis elegans.